A 100-amino-acid polypeptide reads, in one-letter code: Integration host factor subunit alpha (100 aa).

The interval 53–72 (FQLRDKPQRPGRNPKTGEEV) is disordered.

The protein belongs to the bacterial histone-like protein family. As to quaternary structure, heterodimer of an alpha and a beta chain.

In terms of biological role, this protein is one of the two subunits of integration host factor, a specific DNA-binding protein that functions in genetic recombination as well as in transcriptional and translational control. The chain is Integration host factor subunit alpha from Neisseria gonorrhoeae (strain ATCC 700825 / FA 1090).